Reading from the N-terminus, the 440-residue chain is Tetratricopeptide repeat protein 5 (440 aa).

TPR repeat units follow at residues 7 to 61 (EEVK…EEVV), 68 to 98 (AQVL…AVKL), 103 to 130 (VEAW…SGAL), 136 to 174 (KVSL…AVQM), and 179 to 216 (GRSW…AEKV). The Nuclear export signal signature appears at 13–24 (LQKLQELVDQLY). Position 203 is a phosphoserine; by ATM (Ser-203). Ser-221 carries the post-translational modification Phosphoserine; by CHEK2. A TPR 6 repeat occupies 224 to 253 (PDLHLNRATLHKYEENYGEALEGFSRAAAL). The tract at residues 285–287 (KTK) is mediates interaction with 28S rRNA of ribosome-coding tubulin.

Interacts with JMY and p300/EP300; the interaction occurs in the nucleus and augments the association between JMY and p300/EP300 in response to DNA damage. Interacts with PRMT5; the interaction is DNA damage-dependent and promotes PRMT5 interaction with p53/TP53 and subsequent methylation. Forms a complex with HSF1 and p300/EP300; these interactions augment chromatin-bound HSF1 and p300/EP300 histone acetyltransferase activity, resulting in enhanced heat-shock-responsive transcription. Interacts with JMY; the interaction occurs in the cytoplasm and results in the inhibition of JYM's nucleation activity. Interacts with ribosome-coding tubulin (via 60S subunit 28S rRNA and protein uL24/RPL26) and the N-terminal of nascent tubulin polypeptide (via alpha-tubulin MREC motif and beta-tubulin MREI motif); these interactions result in tubulin mRNA-targeted degradation. Interacts with ATP5F1B; the interaction occurs in the mitochondria and results in ATP production decrease. Interacts with p53/TP53; the interaction occurs in the mitochondria and results in increased apoptosis. In terms of processing, phosphorylation by ATM kinase induces nuclear accumulation while interfering with nuclear export, and phosphorylation by CHEK2 kinase enhances nuclear stability.

It is found in the nucleus. Its subcellular location is the cytoplasm. The protein resides in the cytoplasmic vesicle. It localises to the mitochondrion matrix. Cofactor involved in the regulation of various cellular mechanisms such as actin regulation, autophagy, chromatin regulation and DNA repair. In physiological conditions, interacts with cofactor JMY in the cytoplasm which prevents JMY's actin nucleation activity and ability to activate the Arp2/3 complex. Acts as a negative regulator of nutrient stress-induced autophagy by inhibiting JMY's interaction with MAP1LC3B, thereby preventing autophagosome formation. Involves in tubulin autoregulation by promoting its degradation in response to excess soluble tubulin. To do so, associates with the active ribosome near the ribosome exit tunnel and with nascent tubulin polypeptides early during their translation, triggering tubulin mRNA-targeted degradation. Following DNA damage, phosphorylated by DNA damage responsive protein kinases ATM and CHEK2, leading to its nuclear accumulation and stability. Nuclear TTC5/STRAP promotes the assembly of a stress-responsive p53/TP53 coactivator complex, which includes the coactivators JMY and p300, thereby increasing p53/TP53-dependent transcription and apoptosis. Also recruits arginine methyltransferase PRMT5 to p53/TP53 when DNA is damaged, allowing PRMT5 to methylate p53/TP53. In DNA stress conditions, also prevents p53/TP53 degradation by E3 ubiquitin ligase MDM2. Upon heat-shock stress, forms a chromatin-associated complex with heat-shock factor 1 HSF1 and p300/EP300 to stimulate heat-shock-responsive transcription, thereby increasing cell survival. Mitochondrial TTC5/STRAP interacts with ATP synthase subunit beta ATP5F1B which decreased ATP synthase activity and lowers mitochondrial ATP production, thereby regulating cellular respiration and mitochondrial-dependent apoptosis. Mitochondrial TTC5/STRAP also regulates p53/TP53-mediated apoptosis. This Bos taurus (Bovine) protein is Tetratricopeptide repeat protein 5 (TTC5).